Consider the following 493-residue polypeptide: Acetylcholine receptor subunit epsilon (493 aa).

Residues 1–20 form the signal peptide; the sequence is MARAPLGVLLLLGLLGRGVG. Residues 21–239 lie on the Extracellular side of the membrane; that stretch reads KNEELRLYHH…VIYSLIIRRK (219 aa). N-linked (GlcNAc...) asparagine glycans are attached at residues N86 and N161. A disulfide bridge connects residues C148 and C162. A helical membrane pass occupies residues 240 to 264; sequence PLFYVINIIVPCVLISGLVLLAYFL. The Cytoplasmic portion of the chain corresponds to 265–272; sequence PAQAGGQK. A helical membrane pass occupies residues 273–291; sequence CTVSINVLLAQTVFLFLIA. Topologically, residues 292–306 are extracellular; it reads QKIPETSLSVPLLGR. Residues 307-328 traverse the membrane as a helical segment; that stretch reads FLIFVMVVATLIVMNCVIVLNV. The Cytoplasmic portion of the chain corresponds to 329 to 456; that stretch reads SQRTPTTHAM…WVRMGNALDN (128 aa). Residues 457–480 form a helical membrane-spanning segment; it reads ICFWAALVLFSVGSSLIFLGAYFN. At 481–493 the chain is on the extracellular side; sequence RVPDLPYAPCIQP.

This sequence belongs to the ligand-gated ion channel (TC 1.A.9) family. Acetylcholine receptor (TC 1.A.9.1) subfamily. Epsilon/CHRNE sub-subfamily. In terms of assembly, pentamer of two alpha chains, and one each of the beta, delta, and gamma (in immature muscle) or epsilon (in mature muscle) chains. The muscle heteropentamer composed of alpha-1, beta-1, delta, epsilon subunits interacts with the alpha-conotoxin ImII.

Its subcellular location is the postsynaptic cell membrane. It is found in the cell membrane. It carries out the reaction K(+)(in) = K(+)(out). It catalyses the reaction Na(+)(in) = Na(+)(out). Its function is as follows. After binding acetylcholine, the AChR responds by an extensive change in conformation that affects all subunits and leads to opening of an ion-conducting channel across the plasma membrane. This Homo sapiens (Human) protein is Acetylcholine receptor subunit epsilon.